Reading from the N-terminus, the 730-residue chain is Synaptotagmin-like protein 5 (730 aa).

The RabBD domain maps to 7 to 123 (FINLSFLLDH…IITGEWFFEE (117 aa)). Residues 64 to 106 (CVHCHRNLGLIFDRGDPCQACSLRVCRECRVAGPNGSWKCTVC) form an FYVE-type zinc finger. Ser147 is subject to Phosphoserine. Disordered stretches follow at residues 147–188 (SPGA…GFLL), 217–271 (QHFR…TRTV), and 294–355 (SQEL…LDKD). Composition is skewed to polar residues over residues 248 to 271 (PKSS…TRTV) and 305 to 322 (TSGT…SSDQ). C2 domains lie at 406–527 (VSGE…DEWF) and 563–694 (PPEQ…VDWM).

In terms of assembly, binds RAB27A that has been activated by GTP-binding, and possibly also RAB3A and RAB6A. Highly expressed in placenta and liver.

The protein resides in the membrane. May act as Rab effector protein and play a role in vesicle trafficking. Binds phospholipids. This chain is Synaptotagmin-like protein 5 (SYTL5), found in Homo sapiens (Human).